Here is a 121-residue protein sequence, read N- to C-terminus: Perlustrin-like protein (121 aa).

The signal sequence occupies residues 1-23; sequence MKFGVGFLLSCLVALNTVQNMLA. The 81-residue stretch at 24–104 folds into the IGFBP N-terminal domain; the sequence is LSCLPCDFDT…FDFKGTCQES (81 aa). 6 disulfide bridges follow: Cys-26/Cys-52, Cys-29/Cys-54, Cys-36/Cys-55, Cys-45/Cys-58, Cys-66/Cys-79, and Cys-73/Cys-101. Residues Asn-68, Asn-81, and Asn-117 are each glycosylated (N-linked (GlcNAc...) asparagine).

As to expression, component of the acid-insoluble organic matrix of calcified layers of the shell (at protein level).

The protein localises to the secreted. This Lottia gigantea (Giant owl limpet) protein is Perlustrin-like protein.